Consider the following 197-residue polypeptide: Protein Hikeshi (197 aa).

Residues 18 to 55 form a required for F-X-F-G repeats-nucleoporins recognition and nuclear import region; sequence VAEDKFVFDLPDYENINHVVVFMLGTVPFPEGMGGSVY. A flexible linker region involved in nuclear import of HSP70 proteins region spans residues 124–134; that stretch reads QTPVGNAAVSS.

Belongs to the OPI10 family. As to quaternary structure, forms an asymmetric homodimer; required for binding and nuclear import of HSP70 proteins. Interacts with ATP-bound HSP70 proteins. Interacts with NUP62 and NUP153 (via F-X-F-G repeats). Interacts with HSPA8.

The protein resides in the cytoplasm. It is found in the cytosol. The protein localises to the nucleus. Functionally, acts as a specific nuclear import carrier for HSP70 proteins following heat-shock stress: acts by mediating the nucleoporin-dependent translocation of ATP-bound HSP70 proteins into the nucleus. HSP70 proteins import is required to protect cells from heat shock damages. Does not translocate ADP-bound HSP70 proteins into the nucleus. In Bos taurus (Bovine), this protein is Protein Hikeshi.